Consider the following 390-residue polypeptide: UPF0229 protein OB2647 (390 aa).

The interval 99 to 121 (NASQQGQQGQGNGKKAGDQPGTD) is disordered.

The protein belongs to the UPF0229 family.

The sequence is that of UPF0229 protein OB2647 from Oceanobacillus iheyensis (strain DSM 14371 / CIP 107618 / JCM 11309 / KCTC 3954 / HTE831).